Consider the following 424-residue polypeptide: Serine--tRNA ligase (424 aa).

Position 229–231 (229–231) interacts with L-serine; the sequence is TAE. ATP-binding positions include 260–262 and Val-276; that span reads RKE. Glu-283 is a binding site for L-serine. Residue 347 to 350 participates in ATP binding; the sequence is ELVS. Residue Thr-383 coordinates L-serine.

This sequence belongs to the class-II aminoacyl-tRNA synthetase family. Type-1 seryl-tRNA synthetase subfamily. Homodimer. The tRNA molecule binds across the dimer.

It localises to the cytoplasm. It catalyses the reaction tRNA(Ser) + L-serine + ATP = L-seryl-tRNA(Ser) + AMP + diphosphate + H(+). The enzyme catalyses tRNA(Sec) + L-serine + ATP = L-seryl-tRNA(Sec) + AMP + diphosphate + H(+). The protein operates within aminoacyl-tRNA biosynthesis; selenocysteinyl-tRNA(Sec) biosynthesis; L-seryl-tRNA(Sec) from L-serine and tRNA(Sec): step 1/1. Functionally, catalyzes the attachment of serine to tRNA(Ser). Is also able to aminoacylate tRNA(Sec) with serine, to form the misacylated tRNA L-seryl-tRNA(Sec), which will be further converted into selenocysteinyl-tRNA(Sec). The sequence is that of Serine--tRNA ligase from Methanosphaera stadtmanae (strain ATCC 43021 / DSM 3091 / JCM 11832 / MCB-3).